Reading from the N-terminus, the 1093-residue chain is Non-canonical non-ribosomal peptide synthetase ascB (1093 aa).

A compositionally biased stretch (low complexity) spans Met1–Gly26. The disordered stretch occupies residues Met1–Ile27. An adenylation (A) domain region spans residues Glu35–Asn392. The region spanning Asp591–Ser678 is the Carrier domain. Position 627 is an O-(pantetheine 4'-phosphoryl)serine (Ser627). Residues Leu721–Val971 are thioester reductase (TR) domain.

This sequence belongs to the NRP synthetase family.

It carries out the reaction ilicicolinate B + AH2 + ATP = ilicicolin B + A + AMP + diphosphate. Its pathway is secondary metabolite biosynthesis; terpenoid biosynthesis. In terms of biological role, non-canonical non-ribosomal peptide synthetase; part of the asc-1 gene cluster that mediates the biosynthesis of both ascochlorin and ascofuranone, a strong inhibitor of cyanide-insensitive alternative oxidases and a promising drug candidate against African trypanosomiasis. The first step in the pathway is performed by the non-reducing polyketide synthase ascC that produces orsellinic acid by condensing acetyl-CoA with 3 malonyl-CoA units. Orsellinic acid is then prenylated by the prenyltransferase ascA to yield ilicicolinic acid B. Ilicicolinic acid B is further reduced to ilicicolin B by the reductase ascB. The halogenase ascD then chlorinates ilicicolin B to produce ilicicolin A which is converted to ilicicolin A epoxide by the cytochrome P450 monooxygenase ascE that catalyzes stereoselective epoxidation of the terminal double bond of the prenyl group. Ilicicolin A epoxide is the last common precursor for the biosynthesis of ascofuranone and ascochlorin. The terpene cyclase ascF produces a monocyclic terpene, and the cyclization reaction is proposed to be initiated by protonation of the terminal epoxide of ilicicolin A epoxide to generate a monocyclic tertiarycation, which is followed by a series of hydride and methyl shifts with abstraction of proton, leading to the formation of the (14S,15R,19R)-trimethylcyclohexanone ring structure of ilicicolin C, which is finally reduced to ascochlorin by the dehydrogenase ascG. On the other hand, ilicicolin A epoxide is hydroxylated by the cytochrome P450 monooxygenase ascH, and the resultant product is cyclized by the terpene cyclase ascI to ascofuranol via protonation-initiated epoxide ring opening, which facilitates the 6-endo-tet cyclization to form the tetrahy-drofuran ring. Finally, ascofuranol is oxidized into ascofuranone by ascJ. This is Non-canonical non-ribosomal peptide synthetase ascB from Acremonium egyptiacum (Oospora egyptiaca).